A 72-amino-acid chain; its full sequence is Translation initiation factor IF-1 (72 aa).

Positions 1 to 72 (MSKNDVIEVE…TRGRIVYRFK (72 aa)) constitute an S1-like domain.

The protein belongs to the IF-1 family. As to quaternary structure, component of the 30S ribosomal translation pre-initiation complex which assembles on the 30S ribosome in the order IF-2 and IF-3, IF-1 and N-formylmethionyl-tRNA(fMet); mRNA recruitment can occur at any time during PIC assembly.

The protein resides in the cytoplasm. Functionally, one of the essential components for the initiation of protein synthesis. Stabilizes the binding of IF-2 and IF-3 on the 30S subunit to which N-formylmethionyl-tRNA(fMet) subsequently binds. Helps modulate mRNA selection, yielding the 30S pre-initiation complex (PIC). Upon addition of the 50S ribosomal subunit IF-1, IF-2 and IF-3 are released leaving the mature 70S translation initiation complex. The polypeptide is Translation initiation factor IF-1 (Desulforamulus reducens (strain ATCC BAA-1160 / DSM 100696 / MI-1) (Desulfotomaculum reducens)).